The sequence spans 294 residues: Gap junction delta-3 protein (294 aa).

The Cytoplasmic segment spans residues 1-24 (MGEWAFLGSLLDAVQLQSPLVGRL). The helical transmembrane segment at 25-45 (WLVVMLIFRILVLATVGGAVF) threads the bilayer. Over 46-76 (EDEQEEFVCNTLQPGCRQTCYDRAFPVSHYR) the chain is Extracellular. The chain crosses the membrane as a helical span at residues 77-97 (FWLFHILLLSAPPVLFVVYSM). The Cytoplasmic portion of the chain corresponds to 98-136 (HRAGKEAGGAEAAAQCAPGLPEAQCAPCALRARRARRCY). The chain crosses the membrane as a helical span at residues 137 to 157 (LLSVALRLLAELTFLGGQALL). At 158–188 (YGFRVAPHFACAGPPCPHTVDCFVSRPTEKT) the chain is on the extracellular side. The helical transmembrane segment at 189–209 (VFVLFYFAVGLLSALLSVAEL) threads the bilayer. Residues 210 to 294 (GHLLWKGRPR…PATGRRDLAI (85 aa)) lie on the Cytoplasmic side of the membrane. The tract at residues 233–294 (EAQKLLPPPP…PATGRRDLAI (62 aa)) is disordered. Pro residues predominate over residues 238–250 (LPPPPPPPPPPAL).

It belongs to the connexin family. Delta-type subfamily. A connexon is composed of a hexamer of connexins. Interacts with TJP1. Expressed in vascular smooth muscle cells. Found in heart, colon, and artery (at protein level). Found in cerebral cortex, heart, liver, lung, kidney, spleen and testis.

The protein resides in the cell membrane. The protein localises to the cell junction. Its subcellular location is the gap junction. Functionally, one gap junction consists of a cluster of closely packed pairs of transmembrane channels, the connexons, through which materials of low MW diffuse from one cell to a neighboring cell. The sequence is that of Gap junction delta-3 protein (GJD3) from Homo sapiens (Human).